The chain runs to 336 residues: GTPase Obg (336 aa).

Positions 1–159 constitute an Obg domain; sequence MKFVDSATVF…LELAMELKLM (159 aa). Positions 120 to 143 are disordered; sequence GGHGGRGNQHFATSTNQAPRRSEP. Residues 129-138 are compositionally biased toward polar residues; the sequence is HFATSTNQAP. The OBG-type G domain occupies 160–323; the sequence is ADVGLVGFPN…LKDELWRQVS (164 aa). GTP-binding positions include 166-173, 191-195, 213-216, 280-283, and 304-306; these read GFPNAGKS, FTTLV, DIPG, TKMD, and SSV. Positions 173 and 193 each coordinate Mg(2+).

Belongs to the TRAFAC class OBG-HflX-like GTPase superfamily. OBG GTPase family. Monomer. The cofactor is Mg(2+).

The protein localises to the cytoplasm. In terms of biological role, an essential GTPase which binds GTP, GDP and possibly (p)ppGpp with moderate affinity, with high nucleotide exchange rates and a fairly low GTP hydrolysis rate. Plays a role in control of the cell cycle, stress response, ribosome biogenesis and in those bacteria that undergo differentiation, in morphogenesis control. This Chlorobium phaeovibrioides (strain DSM 265 / 1930) (Prosthecochloris vibrioformis (strain DSM 265)) protein is GTPase Obg.